A 303-amino-acid polypeptide reads, in one-letter code: GTPase Era (303 aa).

The Era-type G domain maps to tyrosine 8–glutamate 176. The G1 stretch occupies residues glycine 16 to serine 23. Residue glycine 16–serine 23 participates in GTP binding. Residues glutamine 42–histidine 46 form a G2 region. Residues aspartate 63–glycine 66 form a G3 region. Residues aspartate 63–leucine 67 and asparagine 125–aspartate 128 contribute to the GTP site. Residues asparagine 125–aspartate 128 are G4. The G5 stretch occupies residues isoleucine 155–alanine 157. The KH type-2 domain maps to leucine 207–serine 284.

Belongs to the TRAFAC class TrmE-Era-EngA-EngB-Septin-like GTPase superfamily. Era GTPase family. Monomer.

Its subcellular location is the cytoplasm. It is found in the cell inner membrane. Functionally, an essential GTPase that binds both GDP and GTP, with rapid nucleotide exchange. Plays a role in 16S rRNA processing and 30S ribosomal subunit biogenesis and possibly also in cell cycle regulation and energy metabolism. The polypeptide is GTPase Era (Yersinia enterocolitica serotype O:8 / biotype 1B (strain NCTC 13174 / 8081)).